The following is a 118-amino-acid chain: Holo-[acyl-carrier-protein] synthase (118 aa).

Residues D6 and E55 each contribute to the Mg(2+) site.

It belongs to the P-Pant transferase superfamily. AcpS family. The cofactor is Mg(2+).

It is found in the cytoplasm. It catalyses the reaction apo-[ACP] + CoA = holo-[ACP] + adenosine 3',5'-bisphosphate + H(+). In terms of biological role, transfers the 4'-phosphopantetheine moiety from coenzyme A to a Ser of acyl-carrier-protein. In Chlorobium chlorochromatii (strain CaD3), this protein is Holo-[acyl-carrier-protein] synthase.